The sequence spans 103 residues: MSNQNIRIKLKAFDHRLIDKSALEIVETAKRTGASVRGPIPLPTKKERFTVLTSPHVNKKARDQYELRTYVRLMDVISPTDKTVDALMKLDLAAGVDVAIKLN.

This sequence belongs to the universal ribosomal protein uS10 family. In terms of assembly, part of the 30S ribosomal subunit.

Functionally, involved in the binding of tRNA to the ribosomes. This chain is Small ribosomal subunit protein uS10, found in Ruthia magnifica subsp. Calyptogena magnifica.